Consider the following 418-residue polypeptide: 26S proteasome regulatory subunit 6B (418 aa).

Met1 carries the post-translational modification N-acetylmethionine. Ser21 carries the phosphoserine modification. Thr25 carries the phosphothreonine modification. Ser28 is modified (phosphoserine). 206–213 is a binding site for ATP; it reads GPPGCGKT. N6-acetyllysine occurs at positions 397 and 401.

It belongs to the AAA ATPase family. Component of the 19S proteasome regulatory particle complex. The 26S proteasome consists of a 20S core particle (CP) and two 19S regulatory subunits (RP). The regulatory particle is made of a lid composed of 9 subunits, a base containing 6 ATPases including PSMC4 and few additional components. Interacts with NR1I3. Interacts with PAAF1. Interacts with TRIM5. Interacts with ZFAND1.

It is found in the cytoplasm. It localises to the nucleus. Functionally, component of the 26S proteasome, a multiprotein complex involved in the ATP-dependent degradation of ubiquitinated proteins. This complex plays a key role in the maintenance of protein homeostasis by removing misfolded or damaged proteins, which could impair cellular functions, and by removing proteins whose functions are no longer required. Therefore, the proteasome participates in numerous cellular processes, including cell cycle progression, apoptosis, or DNA damage repair. PSMC4 belongs to the heterohexameric ring of AAA (ATPases associated with diverse cellular activities) proteins that unfolds ubiquitinated target proteins that are concurrently translocated into a proteolytic chamber and degraded into peptides. This is 26S proteasome regulatory subunit 6B (Psmc4) from Mus musculus (Mouse).